A 428-amino-acid chain; its full sequence is Gamma-glutamyl phosphate reductase (428 aa).

This sequence belongs to the gamma-glutamyl phosphate reductase family.

It is found in the cytoplasm. It carries out the reaction L-glutamate 5-semialdehyde + phosphate + NADP(+) = L-glutamyl 5-phosphate + NADPH + H(+). Its pathway is amino-acid biosynthesis; L-proline biosynthesis; L-glutamate 5-semialdehyde from L-glutamate: step 2/2. Catalyzes the NADPH-dependent reduction of L-glutamate 5-phosphate into L-glutamate 5-semialdehyde and phosphate. The product spontaneously undergoes cyclization to form 1-pyrroline-5-carboxylate. The sequence is that of Gamma-glutamyl phosphate reductase from Agrobacterium fabrum (strain C58 / ATCC 33970) (Agrobacterium tumefaciens (strain C58)).